The primary structure comprises 160 residues: Phosphopantetheine adenylyltransferase (160 aa).

Serine 9 provides a ligand contact to substrate. ATP is bound by residues 9–10 and histidine 17; that span reads SF. 3 residues coordinate substrate: lysine 41, valine 73, and lysine 87. Residues 88-90, glutamate 98, and 122-128 contribute to the ATP site; these read GLR and YSFVSSS.

This sequence belongs to the bacterial CoaD family. As to quaternary structure, homohexamer. It depends on Mg(2+) as a cofactor.

The protein resides in the cytoplasm. The catalysed reaction is (R)-4'-phosphopantetheine + ATP + H(+) = 3'-dephospho-CoA + diphosphate. Its pathway is cofactor biosynthesis; coenzyme A biosynthesis; CoA from (R)-pantothenate: step 4/5. Reversibly transfers an adenylyl group from ATP to 4'-phosphopantetheine, yielding dephospho-CoA (dPCoA) and pyrophosphate. The chain is Phosphopantetheine adenylyltransferase from Mycobacterium leprae (strain TN).